Reading from the N-terminus, the 260-residue chain is Small ribosomal subunit protein uS3 (260 aa).

Positions 39–114 (LRQYIEQKLG…QIRINVVEVQ (76 aa)) constitute a KH type-2 domain. The interval 217–260 (GQEPDPLPPASRDRERDPRDRDREPRRRQQQRRRQQFEDRSNEG) is disordered. 2 stretches are compositionally biased toward basic and acidic residues: residues 227-243 (SRDR…EPRR) and 251-260 (QQFEDRSNEG).

It belongs to the universal ribosomal protein uS3 family. Part of the 30S ribosomal subunit. Forms a tight complex with proteins S10 and S14.

In terms of biological role, binds the lower part of the 30S subunit head. Binds mRNA in the 70S ribosome, positioning it for translation. This chain is Small ribosomal subunit protein uS3, found in Nostoc punctiforme (strain ATCC 29133 / PCC 73102).